The sequence spans 645 residues: Fructose-1,6-bisphosphatase class 3 (645 aa).

It belongs to the FBPase class 3 family. It depends on Mn(2+) as a cofactor.

It carries out the reaction beta-D-fructose 1,6-bisphosphate + H2O = beta-D-fructose 6-phosphate + phosphate. It functions in the pathway carbohydrate biosynthesis; gluconeogenesis. This chain is Fructose-1,6-bisphosphatase class 3, found in Fusobacterium nucleatum subsp. nucleatum (strain ATCC 25586 / DSM 15643 / BCRC 10681 / CIP 101130 / JCM 8532 / KCTC 2640 / LMG 13131 / VPI 4355).